Here is a 230-residue protein sequence, read N- to C-terminus: Large ribosomal subunit protein uL1 (230 aa).

It belongs to the universal ribosomal protein uL1 family. Part of the 50S ribosomal subunit.

Functionally, binds directly to 23S rRNA. The L1 stalk is quite mobile in the ribosome, and is involved in E site tRNA release. Its function is as follows. Protein L1 is also a translational repressor protein, it controls the translation of the L11 operon by binding to its mRNA. This Limosilactobacillus reuteri subsp. reuteri (strain JCM 1112) (Lactobacillus reuteri) protein is Large ribosomal subunit protein uL1.